A 197-amino-acid polypeptide reads, in one-letter code: Putative peptidyl-prolyl cis-trans isomerase (197 aa).

Positions 14–195 constitute a PPIase cyclophilin-type domain; it reads GEIKVVMHTN…HDVVIESIDV (182 aa).

The protein belongs to the cyclophilin-type PPIase family.

It carries out the reaction [protein]-peptidylproline (omega=180) = [protein]-peptidylproline (omega=0). In terms of biological role, PPIases accelerate the folding of proteins. It catalyzes the cis-trans isomerization of proline imidic peptide bonds in oligopeptides. This chain is Putative peptidyl-prolyl cis-trans isomerase, found in Staphylococcus aureus (strain COL).